A 118-amino-acid chain; its full sequence is Large ribosomal subunit protein bL20 (118 aa).

This sequence belongs to the bacterial ribosomal protein bL20 family.

Its function is as follows. Binds directly to 23S ribosomal RNA and is necessary for the in vitro assembly process of the 50S ribosomal subunit. It is not involved in the protein synthesizing functions of that subunit. The chain is Large ribosomal subunit protein bL20 from Pseudomonas syringae pv. syringae (strain B728a).